The following is a 679-amino-acid chain: Glycine--tRNA ligase beta subunit (679 aa).

It belongs to the class-II aminoacyl-tRNA synthetase family. In terms of assembly, tetramer of two alpha and two beta subunits.

It localises to the cytoplasm. The catalysed reaction is tRNA(Gly) + glycine + ATP = glycyl-tRNA(Gly) + AMP + diphosphate. The chain is Glycine--tRNA ligase beta subunit from Streptococcus pyogenes serotype M18 (strain MGAS8232).